The sequence spans 123 residues: Large ribosomal subunit protein uL18 (123 aa).

The protein belongs to the universal ribosomal protein uL18 family. As to quaternary structure, part of the 50S ribosomal subunit; part of the 5S rRNA/L5/L18/L25 subcomplex. Contacts the 5S and 23S rRNAs.

In terms of biological role, this is one of the proteins that bind and probably mediate the attachment of the 5S RNA into the large ribosomal subunit, where it forms part of the central protuberance. This is Large ribosomal subunit protein uL18 from Protochlamydia amoebophila (strain UWE25).